The chain runs to 217 residues: Adenylate kinase (217 aa).

ATP is bound at residue G10–T15. Residues S30 to V59 form an NMP region. AMP is bound by residues T31, R36, Q57 to V59, G85 to R88, and Q92. The LID stretch occupies residues G126–D163. Residue R127 participates in ATP binding. Zn(2+) is bound by residues C130 and C133. S136–Y137 is a binding site for ATP. C150 and C153 together coordinate Zn(2+). 2 residues coordinate AMP: R160 and R171. G199 contributes to the ATP binding site.

Belongs to the adenylate kinase family. In terms of assembly, monomer.

The protein resides in the cytoplasm. It catalyses the reaction AMP + ATP = 2 ADP. It participates in purine metabolism; AMP biosynthesis via salvage pathway; AMP from ADP: step 1/1. Functionally, catalyzes the reversible transfer of the terminal phosphate group between ATP and AMP. Plays an important role in cellular energy homeostasis and in adenine nucleotide metabolism. The chain is Adenylate kinase from Clostridium kluyveri (strain NBRC 12016).